We begin with the raw amino-acid sequence, 346 residues long: D-alanine--D-alanine ligase (346 aa).

An ATP-grasp domain is found at 133–326; sequence KFLAQKAGVK…LANSLPKERE (194 aa). Position 159 to 209 (159 to 209) interacts with ATP; it reads YPIILKPARLGSSIGVSVVHDDSELAYAKDVAFEFDKDVLVEPFIKGVKEY. 3 residues coordinate Mg(2+): Asp-282, Glu-294, and Asn-296.

It belongs to the D-alanine--D-alanine ligase family. Requires Mg(2+) as cofactor. The cofactor is Mn(2+).

It localises to the cytoplasm. The enzyme catalyses 2 D-alanine + ATP = D-alanyl-D-alanine + ADP + phosphate + H(+). It participates in cell wall biogenesis; peptidoglycan biosynthesis. Cell wall formation. This Campylobacter concisus (strain 13826) protein is D-alanine--D-alanine ligase.